The following is a 390-amino-acid chain: Coiled-coil domain-containing protein 85C (390 aa).

Coiled coils occupy residues 26–86 (KEEL…RELC) and 116–146 (KEVG…KEII). The tract at residues 153 to 237 (RNGPGSRSSI…RSIPNGLNDS (85 aa)) is disordered. The span at 157–172 (GSRSSIDSQNSLTNLN) shows a compositional bias: polar residues. Residues 182-194 (DGSSTSSTGSAGS) show a composition bias toward low complexity.

It belongs to the CCDC85 family.

Its subcellular location is the cell junction. It is found in the tight junction. It localises to the adherens junction. May play a role in cell-cell adhesion and epithelium development. May play an important role in cortical development, especially in the maintenance of radial glia. The sequence is that of Coiled-coil domain-containing protein 85C (ccdc85c) from Xenopus laevis (African clawed frog).